We begin with the raw amino-acid sequence, 442 residues long: Pyruvate dehydrogenase complex protein X component, mitochondrial (442 aa).

Residues 1 to 35 (MASLAAACRVSARLAARKLQHDAAVRGFRSSAAAL) constitute a mitochondrion transit peptide. Residues 37-113 (AQNFMMPALS…QVGTRIAVVA (77 aa)) form the Lipoyl-binding domain. K78 bears the N6-lipoyllysine mark. The disordered stretch occupies residues 119-169 (ITKLEIPPDEGPQQLKAAAPAPAPTPAPAPASPQPQFAAPTPSPPKASTKV). Residues 139–151 (APAPTPAPAPASP) show a composition bias toward pro residues. The segment covering 152-169 (QPQFAAPTPSPPKASTKV) has biased composition (low complexity). Residues 175–215 (PLLPSVHQLIKENGLDESAVSNITPTGPGGRILKGDVLAYL) form the Peripheral subunit-binding (PSBD) domain. A disordered region spans residues 244 to 269 (AKPVEPEKPQEEKASAPAPAPRAPEP). Residues 245-257 (KPVEPEKPQEEKA) are compositionally biased toward basic and acidic residues. Residues 317–336 (PLPTNYQPTADELFDQVLGL) are interaction to the E2 core.

It belongs to the 2-oxoacid dehydrogenase family. In terms of assembly, eukaryotic pyruvate dehydrogenase (PDH) complexes are organized as a core consisting of the oligomeric dihydrolipoamide acetyl-transferase (E2), around which are arranged multiple copies of pyruvate dehydrogenase (E1), dihydrolipoamide dehydrogenase (E3) and protein X (E3BP) bound by non-covalent bonds. The Chaetomium thermophilum PDH complex contains 60 E2 units, 12 E3BP units, about 20 E1 units, and 12 or more E3 units. The units are organized in 1 E2 60-mer, 4 E3BP trimers, about 20 E1 tetramers, and a maximum of 12 E3 dimers. The E3BP trimers are bound inside the icosahedral core with tetrahedral symmetry.

Its subcellular location is the mitochondrion. Functionally, the 10-megadalton pyruvate dehydrogenase complex contains multiple copies of three enzymatic components: pyruvate dehydrogenase (E1), dihydrolipoamide acetyltransferase (E2) and lipoamide dehydrogenase (E3) and catalyzes the overall oxidative decarboxylation of pyruvate to form acetyl-CoA and CO(2). E3BP is responsible for tethering E3 in proximity to the core, forming the entire metabolon, and the number of E3s is limited by the number of E3BPs. Within the complex, pyruvate and thiamine pyrophosphate (TPP or vitamin B1) are bound by pyruvate dehydrogenase E1 subunits alpha and beta and pyruvate is decarboxylated leading to the 2-carbon hydrohyethyl bound to TPP. The E2 component contains covalently-bound lipoyl cofactors and transfers the hydroxyethyl group from TPP to an oxidized form of covalently bound lipoamide, and the resulting acetyl group is then transferred to free coenzyme A to form acetyl-CoA and reduced dihydrolipoamide-E2. Finally, the flavoprotein dihydrolipoamide dehydrogenase (E3) re-oxidizes the lipoyl group of dihydrolipoamide-E2 to form lipoamide-E2 and NADH. A fourth subunit, E3BP, is responsible for tethering E3 in proximity to the core, forming the entire metabolon. The chain is Pyruvate dehydrogenase complex protein X component, mitochondrial from Chaetomium thermophilum (strain DSM 1495 / CBS 144.50 / IMI 039719) (Thermochaetoides thermophila).